A 329-amino-acid polypeptide reads, in one-letter code: Holliday junction branch migration complex subunit RuvB (329 aa).

The tract at residues 1-180 (MKNILQSTEC…FGIPIHLEFY (180 aa)) is large ATPase domain (RuvB-L). Residues Ile-19, Arg-20, Gly-61, Lys-64, Thr-65, Thr-66, 127-129 (EDF), Arg-170, Tyr-180, and Arg-217 each bind ATP. Residue Thr-65 participates in Mg(2+) binding. The interval 181–252 (STEELIKVIQ…FADKALLRLG (72 aa)) is small ATPAse domain (RuvB-S). Residues 255 to 329 (KLGLDRQDIQ…ISYLKEQSYI (75 aa)) form a head domain (RuvB-H) region. The DNA site is built by Arg-308 and Arg-313.

It belongs to the RuvB family. In terms of assembly, homohexamer. Forms an RuvA(8)-RuvB(12)-Holliday junction (HJ) complex. HJ DNA is sandwiched between 2 RuvA tetramers; dsDNA enters through RuvA and exits via RuvB. An RuvB hexamer assembles on each DNA strand where it exits the tetramer. Each RuvB hexamer is contacted by two RuvA subunits (via domain III) on 2 adjacent RuvB subunits; this complex drives branch migration. In the full resolvosome a probable DNA-RuvA(4)-RuvB(12)-RuvC(2) complex forms which resolves the HJ.

It localises to the cytoplasm. It carries out the reaction ATP + H2O = ADP + phosphate + H(+). Its function is as follows. The RuvA-RuvB-RuvC complex processes Holliday junction (HJ) DNA during genetic recombination and DNA repair, while the RuvA-RuvB complex plays an important role in the rescue of blocked DNA replication forks via replication fork reversal (RFR). RuvA specifically binds to HJ cruciform DNA, conferring on it an open structure. The RuvB hexamer acts as an ATP-dependent pump, pulling dsDNA into and through the RuvAB complex. RuvB forms 2 homohexamers on either side of HJ DNA bound by 1 or 2 RuvA tetramers; 4 subunits per hexamer contact DNA at a time. Coordinated motions by a converter formed by DNA-disengaged RuvB subunits stimulates ATP hydrolysis and nucleotide exchange. Immobilization of the converter enables RuvB to convert the ATP-contained energy into a lever motion, pulling 2 nucleotides of DNA out of the RuvA tetramer per ATP hydrolyzed, thus driving DNA branch migration. The RuvB motors rotate together with the DNA substrate, which together with the progressing nucleotide cycle form the mechanistic basis for DNA recombination by continuous HJ branch migration. Branch migration allows RuvC to scan DNA until it finds its consensus sequence, where it cleaves and resolves cruciform DNA. This Ehrlichia canis (strain Jake) protein is Holliday junction branch migration complex subunit RuvB.